The primary structure comprises 130 residues: MSMQDPLADMLTRIRNAQMAEKSVVSMPSSTLKVAVAKVLKDEGYIAGYQISSEIKPLLSIELKYFEGRPVIEEVKRVSRPGLRQYKSVEELPKVRGGLGVSIVSTNKGVMTDRAARAAGVGGEVLCTVF.

Belongs to the universal ribosomal protein uS8 family. As to quaternary structure, part of the 30S ribosomal subunit. Contacts proteins S5 and S12.

In terms of biological role, one of the primary rRNA binding proteins, it binds directly to 16S rRNA central domain where it helps coordinate assembly of the platform of the 30S subunit. In Pseudomonas fluorescens (strain ATCC BAA-477 / NRRL B-23932 / Pf-5), this protein is Small ribosomal subunit protein uS8.